Consider the following 111-residue polypeptide: Protein IDA-LIKE 5 (111 aa).

A signal peptide spans Met1–Ala27. The span at Arg46 to Gln56 shows a compositional bias: basic residues. Positions Arg46–Tyr65 are disordered.

As to expression, expressed mainly in flowers. Lower levels in buds and seedlings. Detected in vascular tissues and in hydathodes.

It is found in the secreted. The protein localises to the extracellular space. In terms of biological role, may be involved in floral abscission. The chain is Protein IDA-LIKE 5 (IDL5) from Arabidopsis thaliana (Mouse-ear cress).